The following is a 419-amino-acid chain: Gamma-glutamyl phosphate reductase (419 aa).

This sequence belongs to the gamma-glutamyl phosphate reductase family.

Its subcellular location is the cytoplasm. It catalyses the reaction L-glutamate 5-semialdehyde + phosphate + NADP(+) = L-glutamyl 5-phosphate + NADPH + H(+). It participates in amino-acid biosynthesis; L-proline biosynthesis; L-glutamate 5-semialdehyde from L-glutamate: step 2/2. Catalyzes the NADPH-dependent reduction of L-glutamate 5-phosphate into L-glutamate 5-semialdehyde and phosphate. The product spontaneously undergoes cyclization to form 1-pyrroline-5-carboxylate. The chain is Gamma-glutamyl phosphate reductase from Maridesulfovibrio salexigens (strain ATCC 14822 / DSM 2638 / NCIMB 8403 / VKM B-1763) (Desulfovibrio salexigens).